Consider the following 462-residue polypeptide: L-seryl-tRNA(Sec) selenium transferase (462 aa).

Lysine 292 is modified (N6-(pyridoxal phosphate)lysine).

The protein belongs to the SelA family. The cofactor is pyridoxal 5'-phosphate.

It localises to the cytoplasm. The catalysed reaction is L-seryl-tRNA(Sec) + selenophosphate + H(+) = L-selenocysteinyl-tRNA(Sec) + phosphate. Its pathway is aminoacyl-tRNA biosynthesis; selenocysteinyl-tRNA(Sec) biosynthesis; selenocysteinyl-tRNA(Sec) from L-seryl-tRNA(Sec) (bacterial route): step 1/1. Converts seryl-tRNA(Sec) to selenocysteinyl-tRNA(Sec) required for selenoprotein biosynthesis. This is L-seryl-tRNA(Sec) selenium transferase from Geobacter metallireducens (strain ATCC 53774 / DSM 7210 / GS-15).